The sequence spans 1104 residues: Protein transport protein SEC31 homolog B (1104 aa).

WD repeat units follow at residues 5 to 45 (KGVG…EIFK), 62 to 109 (PSSE…GSQP), 120 to 160 (VHKG…EPSH), 170 to 210 (ATQG…PIIN), 214 to 257 (SVRR…SPVR), 261 to 301 (GHQR…IVAE), and 304 to 344 (AGNN…RYGV). Threonine 526 carries the phosphothreonine modification. The disordered stretch occupies residues 527–562 (PVSTSAKDFMPSDTDFSTKGEETQEMQEEEEESSDP). Over residues 549-560 (TQEMQEEEEESS) the composition is skewed to acidic residues. The stretch at 662-707 (TLCDALASKLMAAGNTLAAVLCYICAGNVDRTVEIWSRSLANERDG) is one WD 8 repeat. Disordered regions lie at residues 782–811 (LSAE…PTQA), 851–874 (HQAQ…PSMR), 892–931 (QQPT…QYPN), and 952–994 (TPGV…SNVP). 3 stretches are compositionally biased toward polar residues: residues 786–811 (PETN…PTQA), 863–874 (PAPTSNAQPSMR), and 892–908 (QQPT…SNNA). Over residues 959–977 (SVQPASPPTQQAAAQAAPA) the composition is skewed to low complexity.

Belongs to the WD repeat SEC31 family. As to quaternary structure, interacts with SEC13A and SEC13B.

Its subcellular location is the golgi apparatus. The protein localises to the endoplasmic reticulum. Its function is as follows. Required for protein transport from the endoplasmic reticulum to the Golgi apparatus. In Arabidopsis thaliana (Mouse-ear cress), this protein is Protein transport protein SEC31 homolog B.